A 287-amino-acid polypeptide reads, in one-letter code: Pyridoxal kinase PdxY (287 aa).

Residues serine 10 and 45 to 46 contribute to the substrate site; that span reads TQ. ATP contacts are provided by residues aspartate 112, alanine 144, glutamate 149, lysine 182, and 209–212; that span reads RPLV. Aspartate 224 serves as a coordination point for substrate.

It belongs to the pyridoxine kinase family. PdxY subfamily. Homodimer. It depends on Mg(2+) as a cofactor.

It catalyses the reaction pyridoxal + ATP = pyridoxal 5'-phosphate + ADP + H(+). Its pathway is cofactor metabolism; pyridoxal 5'-phosphate salvage; pyridoxal 5'-phosphate from pyridoxal: step 1/1. Pyridoxal kinase involved in the salvage pathway of pyridoxal 5'-phosphate (PLP). Catalyzes the phosphorylation of pyridoxal to PLP. The sequence is that of Pyridoxal kinase PdxY from Escherichia coli (strain UTI89 / UPEC).